A 101-amino-acid polypeptide reads, in one-letter code: Large ribosomal subunit protein uL24 (101 aa).

This sequence belongs to the universal ribosomal protein uL24 family. Part of the 50S ribosomal subunit.

One of two assembly initiator proteins, it binds directly to the 5'-end of the 23S rRNA, where it nucleates assembly of the 50S subunit. Its function is as follows. One of the proteins that surrounds the polypeptide exit tunnel on the outside of the subunit. The polypeptide is Large ribosomal subunit protein uL24 (Borreliella afzelii (strain PKo) (Borrelia afzelii)).